The following is a 3010-amino-acid chain: Probable polyketide synthase 2 (3010 aa).

A Ketosynthase family 3 (KS3) domain is found at S9–E432. Active-site for beta-ketoacyl synthase activity residues include C174, H313, and H353. The interval G629 to Y662 is acyl/malonyl transferase. S639 serves as the catalytic For acyl/malonyl transferase activity. The N-terminal hotdog fold stretch occupies residues A944–S1063. Residues A944–N1235 form the PKS/mFAS DH domain. H976 functions as the Proton acceptor; for dehydratase activity in the catalytic mechanism. The tract at residues N1080–N1235 is C-terminal hotdog fold. Catalysis depends on D1146, which acts as the Proton donor; for dehydratase activity. In terms of domain architecture, Carrier spans D2482–V2559. S2519 is modified (O-(pantetheine 4'-phosphoryl)serine).

Pantetheine 4'-phosphate serves as cofactor.

In terms of biological role, probable polyketide synthase. The chain is Probable polyketide synthase 2 (pks2) from Dictyostelium discoideum (Social amoeba).